Here is a 321-residue protein sequence, read N- to C-terminus: Probable pectate lyase A (321 aa).

The first 18 residues, Met1–Ala18, serve as a signal peptide directing secretion. Residue Asn93 is glycosylated (N-linked (GlcNAc...) asparagine). Ca(2+)-binding residues include Asp134, Asp163, and Asp167. Arg220 is an active-site residue. An N-linked (GlcNAc...) asparagine glycan is attached at Asn238.

The protein belongs to the polysaccharide lyase 1 family. It depends on Ca(2+) as a cofactor.

The protein localises to the secreted. It catalyses the reaction Eliminative cleavage of (1-&gt;4)-alpha-D-galacturonan to give oligosaccharides with 4-deoxy-alpha-D-galact-4-enuronosyl groups at their non-reducing ends.. Pectinolytic enzyme consist of four classes of enzymes: pectin lyase, polygalacturonase, pectin methylesterase and rhamnogalacturonase. Among pectinolytic enzymes, pectin lyase is the most important in depolymerization of pectin, since it cleaves internal glycosidic bonds of highly methylated pectins. Favors pectate, the anion, over pectin, the methyl ester. The sequence is that of Probable pectate lyase A (plyA) from Neosartorya fischeri (strain ATCC 1020 / DSM 3700 / CBS 544.65 / FGSC A1164 / JCM 1740 / NRRL 181 / WB 181) (Aspergillus fischerianus).